We begin with the raw amino-acid sequence, 1038 residues long: Probable ubiquitin conjugation factor E4 (1038 aa).

2 disordered regions span residues 430–459 and 1010–1038; these read ANDA…ASGQ and SHQS…MLID. A compositionally biased stretch (low complexity) spans 446 to 459; the sequence is SKEATSSSSNASGQ. In terms of domain architecture, U-box spans 940-1014; sequence EIPDEFLDPI…DEFVKSHQSK (75 aa). Residues 1017 to 1028 show a composition bias toward basic and acidic residues; that stretch reads TSGEDSSNKERI. Residues 1029–1038 show a composition bias toward polar residues; the sequence is QTTNSDMLID.

Belongs to the ubiquitin conjugation factor E4 family.

It localises to the cytoplasm. Its subcellular location is the nucleus. The catalysed reaction is S-ubiquitinyl-[E2 ubiquitin-conjugating enzyme]-L-cysteine + [acceptor protein]-L-lysine = [E2 ubiquitin-conjugating enzyme]-L-cysteine + N(6)-ubiquitinyl-[acceptor protein]-L-lysine.. The protein operates within protein modification; protein ubiquitination. In terms of biological role, ubiquitin-protein ligase that may function as an E3 ligase in conjunction with specific E1 and E2 ligases. May also function as an E4 ligase mediating the assembly of polyubiquitin chain assembly on substrates monoubiquitinated by another E3 ubiquitin ligase. The sequence is that of Probable ubiquitin conjugation factor E4 (PUB1) from Arabidopsis thaliana (Mouse-ear cress).